Reading from the N-terminus, the 536-residue chain is Testis-specific expressed protein 55 (536 aa).

Residues 1–11 (MEEPPQEALAE) show a composition bias toward low complexity. Disordered regions lie at residues 1 to 287 (MEEP…PGTS) and 328 to 348 (SNAD…QTDH). Residues 35–52 (QKNQAERKADNHTAHRIA) show a composition bias toward basic and acidic residues. Composition is skewed to polar residues over residues 62–85 (QAES…STPG) and 105–136 (QVNQ…QVSG). Composition is skewed to basic and acidic residues over residues 138–158 (TEER…ERRT) and 173–222 (RGSR…ERRP). The segment covering 226–242 (IDSGSSVPSDQSPSVQI) has biased composition (low complexity). A compositionally biased stretch (polar residues) spans 243–255 (DSGSSVPSDQRPS). Over residues 339-348 (HYTESDQTDH) the composition is skewed to basic and acidic residues.

In terms of tissue distribution, testis-specific.

It localises to the nucleus. The protein resides in the cell projection. It is found in the cilium. Its subcellular location is the flagellum. This is Testis-specific expressed protein 55 from Homo sapiens (Human).